Here is a 179-residue protein sequence, read N- to C-terminus: Large ribosomal subunit protein uL6 (179 aa).

The protein belongs to the universal ribosomal protein uL6 family. As to quaternary structure, part of the 50S ribosomal subunit.

Its function is as follows. This protein binds to the 23S rRNA, and is important in its secondary structure. It is located near the subunit interface in the base of the L7/L12 stalk, and near the tRNA binding site of the peptidyltransferase center. The chain is Large ribosomal subunit protein uL6 from Acidobacterium capsulatum (strain ATCC 51196 / DSM 11244 / BCRC 80197 / JCM 7670 / NBRC 15755 / NCIMB 13165 / 161).